Reading from the N-terminus, the 63-residue chain is Cecropin-B (63 aa).

Positions 1-23 (MNFNKIFVFVALILAISLGNSEA) are cleaved as a signal peptide. Arg62 is modified (arginine amide).

This sequence belongs to the cecropin family. In terms of tissue distribution, strongly expressed in larval, pupal and adult fat body and hemocytes after injection of bacteria. Maximal expression is seen in pupae.

The protein resides in the secreted. Functionally, cecropins have lytic and antibacterial activity against several Gram-positive and Gram-negative bacteria. The chain is Cecropin-B (CecB) from Drosophila melanogaster (Fruit fly).